The sequence spans 254 residues: Small ribosomal subunit protein uS2 (254 aa).

This sequence belongs to the universal ribosomal protein uS2 family.

The chain is Small ribosomal subunit protein uS2 from Borrelia hermsii (strain HS1 / DAH).